The sequence spans 340 residues: UPF0324 membrane protein OB3406 (340 aa).

Helical transmembrane passes span 12-31, 36-58, 94-116, 126-148, 155-177, 215-237, 257-276, 281-303, and 315-337; these read SFYT…GVLC, LDIM…TIGL, GLHA…YSLA, SILT…APLV, TAVS…TMMY, IAIV…IGIY, IPWF…IGFL, VNLL…GLNV, and VFFA…IYVM.

The protein belongs to the UPF0324 family.

Its subcellular location is the cell membrane. This Oceanobacillus iheyensis (strain DSM 14371 / CIP 107618 / JCM 11309 / KCTC 3954 / HTE831) protein is UPF0324 membrane protein OB3406.